The sequence spans 522 residues: BAR/IMD domain-containing adapter protein 2-like 2 (522 aa).

The region spanning 1–239 (MAPEMDQFYR…HSPGLLGPAL (239 aa)) is the IMD domain. Disordered regions lie at residues 220 to 325 (SEAS…GGGG) and 404 to 502 (PMSP…GTNP). Residues serine 231, serine 272, and serine 303 each carry the phosphoserine modification. Polar residues predominate over residues 297–317 (RTPSASSLYASSTQRSRSNSF). In terms of domain architecture, SH3 spans 324–387 (GGARRVRALV…PEAYVKPVEE (64 aa)). Positions 443 to 456 (SQSRSRTPSRVPSR) are enriched in low complexity. The segment covering 457–466 (APSPAPPPLP) has biased composition (pro residues). A phosphoserine mark is found at serine 472 and serine 475.

As to expression, expressed in the epithelial layer of the intestine and in the kidney.

It localises to the cell membrane. The protein localises to the cell junction. Its subcellular location is the cytoplasmic vesicle membrane. Its function is as follows. Phosphoinositides-binding protein that induces the formation of planar or gently curved membrane structures. Binds to phosphoinositides, including to phosphatidylinositol 4,5-bisphosphate (PtdIns(4,5)P2) headgroups. There seems to be no clear preference for a specific phosphoinositide. This is BAR/IMD domain-containing adapter protein 2-like 2 (Baiap2l2) from Mus musculus (Mouse).